The sequence spans 337 residues: Anthranilate phosphoribosyltransferase (337 aa).

5-phospho-alpha-D-ribose 1-diphosphate contacts are provided by residues Gly81, 84 to 85 (GD), Ser89, 91 to 94 (NVST), 109 to 117 (KHGNRALSS), and Ala121. Gly81 contacts anthranilate. Ser93 is a binding site for Mg(2+). Asn112 is an anthranilate binding site. Arg167 is an anthranilate binding site. Residues Asp226 and Glu227 each coordinate Mg(2+).

This sequence belongs to the anthranilate phosphoribosyltransferase family. As to quaternary structure, homodimer. The cofactor is Mg(2+).

The catalysed reaction is N-(5-phospho-beta-D-ribosyl)anthranilate + diphosphate = 5-phospho-alpha-D-ribose 1-diphosphate + anthranilate. The protein operates within amino-acid biosynthesis; L-tryptophan biosynthesis; L-tryptophan from chorismate: step 2/5. Catalyzes the transfer of the phosphoribosyl group of 5-phosphorylribose-1-pyrophosphate (PRPP) to anthranilate to yield N-(5'-phosphoribosyl)-anthranilate (PRA). The protein is Anthranilate phosphoribosyltransferase of Bradyrhizobium sp. (strain BTAi1 / ATCC BAA-1182).